A 206-amino-acid polypeptide reads, in one-letter code: Small ribosomal subunit protein uS4 (206 aa).

An S4 RNA-binding domain is found at Gly96 to Lys156.

This sequence belongs to the universal ribosomal protein uS4 family. As to quaternary structure, part of the 30S ribosomal subunit. Contacts protein S5. The interaction surface between S4 and S5 is involved in control of translational fidelity.

One of the primary rRNA binding proteins, it binds directly to 16S rRNA where it nucleates assembly of the body of the 30S subunit. Its function is as follows. With S5 and S12 plays an important role in translational accuracy. The protein is Small ribosomal subunit protein uS4 of Pectobacterium atrosepticum (strain SCRI 1043 / ATCC BAA-672) (Erwinia carotovora subsp. atroseptica).